A 155-amino-acid chain; its full sequence is Ribosome maturation factor RimP (155 aa).

Belongs to the RimP family.

The protein localises to the cytoplasm. Required for maturation of 30S ribosomal subunits. This is Ribosome maturation factor RimP from Prochlorococcus marinus (strain MIT 9211).